The sequence spans 607 residues: MNSVSAAERLKSFGDAGPVCNKSIIFPSRVVTLANSFEKKDRSWYVKSQIPTDLSIQVNDITFKAHKFPLISKCGYISSIELKPSTSENGYHLKLENFPGGADTFETILKFCYNLPLDLNPLNVAPLRCASEYLYMTEEFEAGNLISKTEAFITFVVLASWRDTLTVLRSCTNLSPWAENLQIVRRCCDLLAWKACNDNNIPEDVVDRNERCLYNDIATLDIDHFMRVITTMKARRAKPQITGKIIMKYADNFLPVINDDLEGIKGYGLGKNELQFSVNRGRMEESNSLGCQEHKETIESLVSVLPPQSGAVSCHFLLRMLKTSIVYSASPALISDLEKRVGMALEDANVCDLLIPNFKNEEQQERVRIFEFFLMHEQQQVLGKPSISKLLDNYLAEIAKDPYLPITKFQVLAEMLPENAWKCHDGLYRAIDMFLKTHPSLSDHDRRRLCKTMNCEKLSLDACLHAAQNDRLPLRTIVQINTQVLFSEQVKMRMMMQDKLPEKEEENSGGREDKRMSRDNEIIKTLKEELENVKKKMSELQSDYNELQQEYERLSSKQKSSHNWGLRWQKVKKSFQTKREDEETRERTRRRSSTGQRTSFRRRMSMS.

Residues 52–121 form the BTB domain; that stretch reads TDLSIQVNDI…CYNLPLDLNP (70 aa). The NPH3 domain occupies 211–487; that stretch reads RCLYNDIATL…VQINTQVLFS (277 aa). Tyrosine 428 bears the Phosphotyrosine mark. Disordered stretches follow at residues 498–520 and 573–607; these read DKLP…SRDN and KSFQ…MSMS. Basic and acidic residues-rich tracts occupy residues 499–520 and 577–586; these read KLPE…SRDN and TKREDEETRE. Residues 511–563 are a coiled coil; sequence REDKRMSRDNEIIKTLKEELENVKKKMSELQSDYNELQQEYERLSSKQKSSHN.

This sequence belongs to the NPH3 family. As to expression, expressed in emerging leaf primordia.

The protein operates within protein modification; protein ubiquitination. Functionally, may act as a substrate-specific adapter of an E3 ubiquitin-protein ligase complex (CUL3-RBX1-BTB) which mediates the ubiquitination and subsequent proteasomal degradation of target proteins. Involved in leaf vasculature patterning. This is BTB/POZ domain-containing protein DOT3 from Arabidopsis thaliana (Mouse-ear cress).